The chain runs to 429 residues: 3-phosphoshikimate 1-carboxyvinyltransferase (429 aa).

3 residues coordinate 3-phosphoshikimate: K23, S24, and R28. K23 is a phosphoenolpyruvate binding site. 2 residues coordinate phosphoenolpyruvate: G97 and R125. 3-phosphoshikimate contacts are provided by S170, S171, Q172, S198, D314, N338, and K342. Residue Q172 participates in phosphoenolpyruvate binding. D314 serves as the catalytic Proton acceptor. Positions 346, 388, and 413 each coordinate phosphoenolpyruvate.

It belongs to the EPSP synthase family. In terms of assembly, monomer.

It localises to the cytoplasm. It catalyses the reaction 3-phosphoshikimate + phosphoenolpyruvate = 5-O-(1-carboxyvinyl)-3-phosphoshikimate + phosphate. Its pathway is metabolic intermediate biosynthesis; chorismate biosynthesis; chorismate from D-erythrose 4-phosphate and phosphoenolpyruvate: step 6/7. Catalyzes the transfer of the enolpyruvyl moiety of phosphoenolpyruvate (PEP) to the 5-hydroxyl of shikimate-3-phosphate (S3P) to produce enolpyruvyl shikimate-3-phosphate and inorganic phosphate. This is 3-phosphoshikimate 1-carboxyvinyltransferase from Pectobacterium atrosepticum (strain SCRI 1043 / ATCC BAA-672) (Erwinia carotovora subsp. atroseptica).